The following is a 455-amino-acid chain: Probable glycine dehydrogenase (decarboxylating) subunit 1 (455 aa).

The protein belongs to the GcvP family. N-terminal subunit subfamily. The glycine cleavage system is composed of four proteins: P, T, L and H. In this organism, the P 'protein' is a heterodimer of two subunits.

The enzyme catalyses N(6)-[(R)-lipoyl]-L-lysyl-[glycine-cleavage complex H protein] + glycine + H(+) = N(6)-[(R)-S(8)-aminomethyldihydrolipoyl]-L-lysyl-[glycine-cleavage complex H protein] + CO2. Its function is as follows. The glycine cleavage system catalyzes the degradation of glycine. The P protein binds the alpha-amino group of glycine through its pyridoxal phosphate cofactor; CO(2) is released and the remaining methylamine moiety is then transferred to the lipoamide cofactor of the H protein. The chain is Probable glycine dehydrogenase (decarboxylating) subunit 1 from Francisella tularensis subsp. tularensis (strain FSC 198).